The following is a 199-amino-acid chain: MAEAPGDIERLIELMARLPGLGPRSARRAVLLMLKKRGAVMAPLAQAMAEVATSARDCVRCGNITNADLCGICRDERRATGELCVVEDVADLWALERAGAFRGRYHVLGGVLSALDSVGPEELRIPRLAERVREEGISEVILALNATVDGQTTAHYIADVLEPSGVQVTSLAQGVPIGGELDYLDDGTIGAALRARRRF.

A C4-type zinc finger spans residues 58–73; the sequence is CVRCGNITNADLCGIC. Residues 81 to 176 enclose the Toprim domain; it reads GELCVVEDVA…QVTSLAQGVP (96 aa).

The protein belongs to the RecR family.

Functionally, may play a role in DNA repair. It seems to be involved in an RecBC-independent recombinational process of DNA repair. It may act with RecF and RecO. In Cereibacter sphaeroides (strain ATCC 17029 / ATH 2.4.9) (Rhodobacter sphaeroides), this protein is Recombination protein RecR.